We begin with the raw amino-acid sequence, 208 residues long: dITP/XTP pyrophosphatase (208 aa).

Position 16-21 (16-21 (SNNKGK)) interacts with substrate. Catalysis depends on D79, which acts as the Proton acceptor. D79 is a Mg(2+) binding site. Residues S80, 166 to 169 (FGYD), K189, and 194 to 195 (HR) contribute to the substrate site.

It belongs to the HAM1 NTPase family. In terms of assembly, homodimer. Requires Mg(2+) as cofactor.

It carries out the reaction XTP + H2O = XMP + diphosphate + H(+). The enzyme catalyses dITP + H2O = dIMP + diphosphate + H(+). It catalyses the reaction ITP + H2O = IMP + diphosphate + H(+). In terms of biological role, pyrophosphatase that catalyzes the hydrolysis of nucleoside triphosphates to their monophosphate derivatives, with a high preference for the non-canonical purine nucleotides XTP (xanthosine triphosphate), dITP (deoxyinosine triphosphate) and ITP. Seems to function as a house-cleaning enzyme that removes non-canonical purine nucleotides from the nucleotide pool, thus preventing their incorporation into DNA/RNA and avoiding chromosomal lesions. This is dITP/XTP pyrophosphatase from Acinetobacter baumannii (strain ACICU).